Reading from the N-terminus, the 958-residue chain is Glycine dehydrogenase (decarboxylating) (958 aa).

K708 is modified (N6-(pyridoxal phosphate)lysine).

This sequence belongs to the GcvP family. In terms of assembly, the glycine cleavage system is composed of four proteins: P, T, L and H. The cofactor is pyridoxal 5'-phosphate.

The catalysed reaction is N(6)-[(R)-lipoyl]-L-lysyl-[glycine-cleavage complex H protein] + glycine + H(+) = N(6)-[(R)-S(8)-aminomethyldihydrolipoyl]-L-lysyl-[glycine-cleavage complex H protein] + CO2. Its function is as follows. The glycine cleavage system catalyzes the degradation of glycine. The P protein binds the alpha-amino group of glycine through its pyridoxal phosphate cofactor; CO(2) is released and the remaining methylamine moiety is then transferred to the lipoamide cofactor of the H protein. This Photorhabdus laumondii subsp. laumondii (strain DSM 15139 / CIP 105565 / TT01) (Photorhabdus luminescens subsp. laumondii) protein is Glycine dehydrogenase (decarboxylating).